We begin with the raw amino-acid sequence, 697 residues long: Elongation factor G (697 aa).

A tr-type G domain is found at 6–281; that stretch reads ENIRNIGICA…AVVDYLPSPI (276 aa). GTP contacts are provided by residues 15–22, 79–83, and 133–136; these read AHIDAGKT, DTPGH, and NKMD.

It belongs to the TRAFAC class translation factor GTPase superfamily. Classic translation factor GTPase family. EF-G/EF-2 subfamily.

Its subcellular location is the cytoplasm. Its function is as follows. Catalyzes the GTP-dependent ribosomal translocation step during translation elongation. During this step, the ribosome changes from the pre-translocational (PRE) to the post-translocational (POST) state as the newly formed A-site-bound peptidyl-tRNA and P-site-bound deacylated tRNA move to the P and E sites, respectively. Catalyzes the coordinated movement of the two tRNA molecules, the mRNA and conformational changes in the ribosome. This is Elongation factor G from Rickettsia bellii (strain OSU 85-389).